The primary structure comprises 418 residues: Glutamyl-tRNA reductase (418 aa).

Residues 49–52, Ser106, 111–113, and Gln117 each bind substrate; these read TCNR and EPQ. Residue Cys50 is the Nucleophile of the active site. 186 to 191 lines the NADP(+) pocket; that stretch reads GAGEMI.

Belongs to the glutamyl-tRNA reductase family. As to quaternary structure, homodimer.

It carries out the reaction (S)-4-amino-5-oxopentanoate + tRNA(Glu) + NADP(+) = L-glutamyl-tRNA(Glu) + NADPH + H(+). It functions in the pathway porphyrin-containing compound metabolism; protoporphyrin-IX biosynthesis; 5-aminolevulinate from L-glutamyl-tRNA(Glu): step 1/2. Catalyzes the NADPH-dependent reduction of glutamyl-tRNA(Glu) to glutamate 1-semialdehyde (GSA). The polypeptide is Glutamyl-tRNA reductase (Alcanivorax borkumensis (strain ATCC 700651 / DSM 11573 / NCIMB 13689 / SK2)).